A 113-amino-acid chain; its full sequence is MHEMSLMESVIEIVCETARQNGATRVKSVRLDVGVLSHVNPDALIFCYEAVRHGTVADSATLEINRIAGEGWCLDCGKTVALEERFGACPDCGRHRVQMTAGDELKIRDMEVI.

Residue His-2 participates in Ni(2+) binding. Residues Cys-73, Cys-76, Cys-89, and Cys-92 each coordinate Zn(2+).

Belongs to the HypA/HybF family.

Its function is as follows. Involved in the maturation of [NiFe] hydrogenases. Required for nickel insertion into the metal center of the hydrogenase. The sequence is that of Hydrogenase maturation factor HypA from Rhizobium leguminosarum bv. viciae.